Reading from the N-terminus, the 1072-residue chain is DNA-directed RNA polymerase subunit beta (1072 aa).

The protein belongs to the RNA polymerase beta chain family. As to quaternary structure, in plastids the minimal PEP RNA polymerase catalytic core is composed of four subunits: alpha, beta, beta', and beta''. When a (nuclear-encoded) sigma factor is associated with the core the holoenzyme is formed, which can initiate transcription.

The protein resides in the plastid. The protein localises to the chloroplast. The catalysed reaction is RNA(n) + a ribonucleoside 5'-triphosphate = RNA(n+1) + diphosphate. In terms of biological role, DNA-dependent RNA polymerase catalyzes the transcription of DNA into RNA using the four ribonucleoside triphosphates as substrates. The sequence is that of DNA-directed RNA polymerase subunit beta from Cycas taitungensis (Prince sago).